The chain runs to 1175 residues: Chromosome partition protein Smc (1175 aa).

Proline 32–asparagine 39 contacts ATP. Positions valine 170 to lysine 504 form a coiled coil. One can recognise an SMC hinge domain in the interval leucine 524–leucine 625. Coiled-coil stretches lie at residues aspartate 684–lysine 918 and serine 944–serine 1022. The tract at residues arginine 807–aspartate 849 is disordered. A compositionally biased stretch (basic and acidic residues) spans arginine 817–arginine 828. Residues threonine 829 to arginine 838 are compositionally biased toward polar residues. Over residues leucine 840–aspartate 849 the composition is skewed to basic and acidic residues.

It belongs to the SMC family. Homodimer.

The protein localises to the cytoplasm. Functionally, required for chromosome condensation and partitioning. The polypeptide is Chromosome partition protein Smc (Delftia acidovorans (strain DSM 14801 / SPH-1)).